The sequence spans 442 residues: Serine--tRNA ligase (442 aa).

244–246 lines the L-serine pocket; the sequence is TAE. Residue 275–277 coordinates ATP; that stretch reads RAE. L-serine is bound at residue glutamate 298. Residue 365–368 coordinates ATP; sequence EISS. Residue serine 400 coordinates L-serine.

Belongs to the class-II aminoacyl-tRNA synthetase family. Type-1 seryl-tRNA synthetase subfamily. In terms of assembly, homodimer. The tRNA molecule binds across the dimer.

The protein localises to the cytoplasm. It carries out the reaction tRNA(Ser) + L-serine + ATP = L-seryl-tRNA(Ser) + AMP + diphosphate + H(+). The catalysed reaction is tRNA(Sec) + L-serine + ATP = L-seryl-tRNA(Sec) + AMP + diphosphate + H(+). Its pathway is aminoacyl-tRNA biosynthesis; selenocysteinyl-tRNA(Sec) biosynthesis; L-seryl-tRNA(Sec) from L-serine and tRNA(Sec): step 1/1. In terms of biological role, catalyzes the attachment of serine to tRNA(Ser). Is also able to aminoacylate tRNA(Sec) with serine, to form the misacylated tRNA L-seryl-tRNA(Sec), which will be further converted into selenocysteinyl-tRNA(Sec). The protein is Serine--tRNA ligase of Bradyrhizobium sp. (strain BTAi1 / ATCC BAA-1182).